We begin with the raw amino-acid sequence, 864 residues long: Translation initiation factor IF-2 (864 aa).

Residues Asp140 to Asn171 show a composition bias toward basic and acidic residues. Residues Asp140–Lys179 are disordered. A tr-type G domain is found at Ile364 to Lys533. The segment at Gly373–Thr380 is G1. Residue Gly373–Thr380 participates in GTP binding. The segment at Gly398–Asn402 is G2. A G3 region spans residues Asp419–Gly422. GTP is bound by residues Asp419–His423 and Asn473–Asp476. The tract at residues Asn473–Asp476 is G4. The G5 stretch occupies residues Ser509–Lys511.

The protein belongs to the TRAFAC class translation factor GTPase superfamily. Classic translation factor GTPase family. IF-2 subfamily.

The protein resides in the cytoplasm. One of the essential components for the initiation of protein synthesis. Protects formylmethionyl-tRNA from spontaneous hydrolysis and promotes its binding to the 30S ribosomal subunits. Also involved in the hydrolysis of GTP during the formation of the 70S ribosomal complex. This is Translation initiation factor IF-2 from Buchnera aphidicola subsp. Acyrthosiphon pisum (strain Tuc7).